Consider the following 384-residue polypeptide: Carbamoyl phosphate synthase small chain (384 aa).

The segment at 1 to 193 (MTKPATTPAI…DSHPEIPASE (193 aa)) is CPSase. L-glutamine contacts are provided by Ser-51, Gly-245, and Gly-247. Residues 197-384 (HVVAYDYGVK…ISAMAPVVDR (188 aa)) form the Glutamine amidotransferase type-1 domain. Residue Cys-273 is the Nucleophile of the active site. L-glutamine-binding residues include Leu-274, Gln-277, Asn-315, Gly-317, and Phe-318. Residues His-357 and Glu-359 contribute to the active site.

This sequence belongs to the CarA family. In terms of assembly, composed of two chains; the small (or glutamine) chain promotes the hydrolysis of glutamine to ammonia, which is used by the large (or ammonia) chain to synthesize carbamoyl phosphate. Tetramer of heterodimers (alpha,beta)4.

It catalyses the reaction hydrogencarbonate + L-glutamine + 2 ATP + H2O = carbamoyl phosphate + L-glutamate + 2 ADP + phosphate + 2 H(+). It carries out the reaction L-glutamine + H2O = L-glutamate + NH4(+). Its pathway is amino-acid biosynthesis; L-arginine biosynthesis; carbamoyl phosphate from bicarbonate: step 1/1. The protein operates within pyrimidine metabolism; UMP biosynthesis via de novo pathway; (S)-dihydroorotate from bicarbonate: step 1/3. In terms of biological role, small subunit of the glutamine-dependent carbamoyl phosphate synthetase (CPSase). CPSase catalyzes the formation of carbamoyl phosphate from the ammonia moiety of glutamine, carbonate, and phosphate donated by ATP, constituting the first step of 2 biosynthetic pathways, one leading to arginine and/or urea and the other to pyrimidine nucleotides. The small subunit (glutamine amidotransferase) binds and cleaves glutamine to supply the large subunit with the substrate ammonia. The sequence is that of Carbamoyl phosphate synthase small chain from Stutzerimonas stutzeri (Pseudomonas stutzeri).